The chain runs to 351 residues: Protein Wnt-4 (351 aa).

The signal sequence occupies residues 1 to 22; that stretch reads MSPEYFLRSLLLIILATFSANA. 2 N-linked (GlcNAc...) asparagine glycosylation sites follow: asparagine 21 and asparagine 88. Cystine bridges form between cysteine 78–cysteine 89, cysteine 128–cysteine 136, cysteine 138–cysteine 155, cysteine 206–cysteine 220, cysteine 208–cysteine 215, cysteine 280–cysteine 311, cysteine 296–cysteine 306, cysteine 310–cysteine 350, cysteine 326–cysteine 341, cysteine 328–cysteine 338, and cysteine 333–cysteine 334. Serine 212 is lipidated: O-palmitoleoyl serine; by PORCN. Residue asparagine 297 is glycosylated (N-linked (GlcNAc...) asparagine).

This sequence belongs to the Wnt family. Interacts with CPZ. Palmitoleoylation is required for efficient binding to frizzled receptors. Depalmitoleoylation leads to Wnt signaling pathway inhibition. As to expression, predominantly expressed in the diencephalon neuromere D2.

It is found in the secreted. It localises to the extracellular space. Its subcellular location is the extracellular matrix. In terms of biological role, ligand for members of the frizzled family of seven transmembrane receptors. Plays an important role in embryonic development. The protein is Protein Wnt-4 (WNT4) of Gallus gallus (Chicken).